We begin with the raw amino-acid sequence, 99 residues long: Putative septation protein SpoVG (99 aa).

This sequence belongs to the SpoVG family.

Could be involved in septation. In Aster yellows witches'-broom phytoplasma (strain AYWB), this protein is Putative septation protein SpoVG.